We begin with the raw amino-acid sequence, 94 residues long: Integration host factor subunit beta (94 aa).

It belongs to the bacterial histone-like protein family. As to quaternary structure, heterodimer of an alpha and a beta chain.

Its function is as follows. This protein is one of the two subunits of integration host factor, a specific DNA-binding protein that functions in genetic recombination as well as in transcriptional and translational control. This is Integration host factor subunit beta from Brucella melitensis biotype 2 (strain ATCC 23457).